The chain runs to 197 residues: Recombination protein RecR (197 aa).

The C4-type zinc finger occupies 56–71; that stretch reads CERCNTFTETEICQRC. A Toprim domain is found at 79-174; sequence SLLCVVEMPA…RVSRLSRGVP (96 aa).

It belongs to the RecR family.

Its function is as follows. May play a role in DNA repair. It seems to be involved in an RecBC-independent recombinational process of DNA repair. It may act with RecF and RecO. The sequence is that of Recombination protein RecR from Aromatoleum aromaticum (strain DSM 19018 / LMG 30748 / EbN1) (Azoarcus sp. (strain EbN1)).